The primary structure comprises 72 residues: Translation initiation factor IF-1 (72 aa).

The S1-like domain occupies methionine 1–lysine 72.

Belongs to the IF-1 family. In terms of assembly, component of the 30S ribosomal translation pre-initiation complex which assembles on the 30S ribosome in the order IF-2 and IF-3, IF-1 and N-formylmethionyl-tRNA(fMet); mRNA recruitment can occur at any time during PIC assembly.

The protein resides in the cytoplasm. Its function is as follows. One of the essential components for the initiation of protein synthesis. Stabilizes the binding of IF-2 and IF-3 on the 30S subunit to which N-formylmethionyl-tRNA(fMet) subsequently binds. Helps modulate mRNA selection, yielding the 30S pre-initiation complex (PIC). Upon addition of the 50S ribosomal subunit IF-1, IF-2 and IF-3 are released leaving the mature 70S translation initiation complex. The sequence is that of Translation initiation factor IF-1 from Hyphomonas neptunium (strain ATCC 15444).